Here is a 120-residue protein sequence, read N- to C-terminus: PYEKIGAELVKEVAKKTDDVAGDGTTTATVLAQALVKEGLRNVAAGANPLGLKRGIEKAVEKITQTLLSSAKDVETKEQIAATAGISAGDQSIGDLIAEAMDKVGNEGVITVEESNTFGL.

23 to 27 (DGTTT) contributes to the ATP binding site.

Belongs to the chaperonin (HSP60) family. In terms of assembly, forms a cylinder of 14 subunits composed of two heptameric rings stacked back-to-back. Interacts with the co-chaperonin GroES.

The protein localises to the cytoplasm. The catalysed reaction is ATP + H2O + a folded polypeptide = ADP + phosphate + an unfolded polypeptide.. Its function is as follows. Together with its co-chaperonin GroES, plays an essential role in assisting protein folding. The GroEL-GroES system forms a nano-cage that allows encapsulation of the non-native substrate proteins and provides a physical environment optimized to promote and accelerate protein folding. The polypeptide is Chaperonin GroEL (Mycobacterium gordonae).